A 344-amino-acid chain; its full sequence is Krueppel-like factor 3 (344 aa).

Positions 1–74 (MLMFDPVPVK…TVNKRGSPPA (74 aa)) are repressor domain. Residue K10 forms a Glycyl lysine isopeptide (Lys-Gly) (interchain with G-Cter in SUMO) linkage. The short motif at 60–68 (EPVDLTVNK) is the 9aaTAD; inactive element. Residues 61-65 (PVDLT) carry the CTBP-binding motif motif. Residues 66 to 111 (VNKRGSPPAAGGSPSSLKFPSHRRASPGLSMPSSSPPIKKYSPPSP) are disordered. Residue K68 forms a Glycyl lysine isopeptide (Lys-Gly) (interchain with G-Cter in SUMO2) linkage. Composition is skewed to low complexity over residues 70–81 (GSPPAAGGSPSS) and 91–107 (SPGL…KKYS). Residues S71, S91, S100, S107, and S110 each carry the phosphoserine modification. K195 is covalently cross-linked (Glycyl lysine isopeptide (Lys-Gly) (interchain with G-Cter in SUMO2)). K197 is covalently cross-linked (Glycyl lysine isopeptide (Lys-Gly) (interchain with G-Cter in SUMO); alternate). Residue K197 forms a Glycyl lysine isopeptide (Lys-Gly) (interchain with G-Cter in SUMO2); alternate linkage. Phosphoserine occurs at positions 215, 223, and 249. The interval 235 to 254 (SVIVQPGKRPLPVESPDTQR) is disordered. 3 consecutive C2H2-type zinc fingers follow at residues 259-283 (HRCD…RRTH), 289-313 (YKCT…FRKH), and 319-341 (FQCP…RKRH).

Belongs to the krueppel C2H2-type zinc-finger protein family. In terms of assembly, monomer. Post-translationally, sumoylated with SUMO1. Sumoylation is enhanced by PIAS1, PIAS2alpha and PIAS2beta, and PIAS4, but not by Pc2. Enhances transcriptional repression, but has no effect on DNA binding. Sumoylation on Lys-197 is the major site. As to expression, in 8.5 day embryos, expressed in midbrain, anterior hindbrain and ventral forebrain. In 9 day embryos, expressed throughout ventral anterior half of embryo including midbrain-hindbrain junction, ventral midbrain, diencephalon and forebrain. At 10.5 days, distribution is more widespread with expression also found in developing limb buds. Widely expressed in the adult.

The protein localises to the nucleus. In terms of biological role, binds to the CACCC box of erythroid cell-expressed genes. May play a role in hematopoiesis. The chain is Krueppel-like factor 3 (Klf3) from Mus musculus (Mouse).